Here is a 294-residue protein sequence, read N- to C-terminus: Phosphonoacetaldehyde hydrolase (294 aa).

Asp-19 functions as the Nucleophile in the catalytic mechanism. Positions 19 and 21 each coordinate Mg(2+). The Schiff-base intermediate with substrate role is filled by Lys-60. Mg(2+) is bound at residue Asp-193.

The protein belongs to the HAD-like hydrolase superfamily. PhnX family. In terms of assembly, homodimer. The cofactor is Mg(2+).

It catalyses the reaction phosphonoacetaldehyde + H2O = acetaldehyde + phosphate + H(+). In terms of biological role, involved in phosphonate degradation. This chain is Phosphonoacetaldehyde hydrolase, found in Hahella chejuensis (strain KCTC 2396).